The sequence spans 603 residues: Probable GMP synthase [glutamine-hydrolyzing] (603 aa).

A Glutamine amidotransferase type-1 domain is found at 6–195 (KIAVVDFGGQ…FIQICGVSKT (190 aa)). The Nucleophile role is filled by cysteine 81. Residues histidine 170 and glutamate 172 contribute to the active site. The GMPS ATP-PPase domain occupies 196–392 (WGIDQFLKEK…LGLESEWVGR (197 aa)). Residue 224–230 (SGGVDST) participates in ATP binding.

Homodimer.

It catalyses the reaction XMP + L-glutamine + ATP + H2O = GMP + L-glutamate + AMP + diphosphate + 2 H(+). It participates in purine metabolism; GMP biosynthesis; GMP from XMP (L-Gln route): step 1/1. Catalyzes the synthesis of GMP from XMP. This is Probable GMP synthase [glutamine-hydrolyzing] (guaA) from Leptospira interrogans serogroup Icterohaemorrhagiae serovar copenhageni (strain Fiocruz L1-130).